The chain runs to 462 residues: MDKKQLLRNLPKIDELLKEEIVNRYLQENSRTLVVDSLRQSIDHYRGEILKNNIDSFTKENVVNYFIDTLEENKSTKFKKVINATGVVIHTNLGRSLLAKEAIENVIKVSENYSNLEYDLKDGKRGSRYSHVEELIKKVTGAEAAMVVNNNAAAVMLALNTLCEGREAIVSRGQLVEIGGSFRIPDVMKFSRAHLVEVGTTNRTHLYDYENNINENTGVLLKVHTSNFKIMGFTEEVSSEEMVQLGGKYKLPVMEDIGSGTLVDFSKYGFTYEPTVQSSLEKGVDVVTFSGDKMLGGPQAGIIVGKKKYIDKMKKNQLTRALRIDKMTLAALEGTLKCYIDEKEAIENIPTLNMILSSKDIHKKRAQRLKRRLQNNVKDFNFKVSEDLSMVGGGSMPGERIPTYVVKVNSDKITAEKIEEKLRLSKNPIIVRVSKDEVILDVRTLFERDFNIIVEEFKKLLK.

N6-(pyridoxal phosphate)lysine is present on Lys-293.

The protein belongs to the SelA family. Requires pyridoxal 5'-phosphate as cofactor.

The protein localises to the cytoplasm. It catalyses the reaction L-seryl-tRNA(Sec) + selenophosphate + H(+) = L-selenocysteinyl-tRNA(Sec) + phosphate. It functions in the pathway aminoacyl-tRNA biosynthesis; selenocysteinyl-tRNA(Sec) biosynthesis; selenocysteinyl-tRNA(Sec) from L-seryl-tRNA(Sec) (bacterial route): step 1/1. Its function is as follows. Converts seryl-tRNA(Sec) to selenocysteinyl-tRNA(Sec) required for selenoprotein biosynthesis. This Clostridium botulinum (strain Okra / Type B1) protein is L-seryl-tRNA(Sec) selenium transferase.